Consider the following 469-residue polypeptide: Serine carboxypeptidase-like 41 (469 aa).

A signal peptide spans 1 to 20; that stretch reads MAIVSLRDVAMVMVTVQVFA. 3 cysteine pairs are disulfide-bonded: C83–C342, C243–C260, and C285–C310. N134 carries N-linked (GlcNAc...) asparagine glycosylation. S175 is a catalytic residue. N255 carries an N-linked (GlcNAc...) asparagine glycan. N-linked (GlcNAc...) asparagine glycosylation is found at N331 and N347. Residues D379 and H436 contribute to the active site. N-linked (GlcNAc...) asparagine glycosylation occurs at N461.

This sequence belongs to the peptidase S10 family. In terms of tissue distribution, expressed in flowers.

It localises to the secreted. Its function is as follows. Probable carboxypeptidase. The chain is Serine carboxypeptidase-like 41 (SCPL41) from Arabidopsis thaliana (Mouse-ear cress).